Consider the following 237-residue polypeptide: Demethylmenaquinone methyltransferase (237 aa).

Residues Thr-58, Asp-79, and 106-107 each bind S-adenosyl-L-methionine; that span reads NA.

This sequence belongs to the class I-like SAM-binding methyltransferase superfamily. MenG/UbiE family.

The enzyme catalyses a 2-demethylmenaquinol + S-adenosyl-L-methionine = a menaquinol + S-adenosyl-L-homocysteine + H(+). The protein operates within quinol/quinone metabolism; menaquinone biosynthesis; menaquinol from 1,4-dihydroxy-2-naphthoate: step 2/2. In terms of biological role, methyltransferase required for the conversion of demethylmenaquinol (DMKH2) to menaquinol (MKH2). This is Demethylmenaquinone methyltransferase from Listeria monocytogenes serotype 4a (strain HCC23).